Reading from the N-terminus, the 67-residue chain is Photosystem II reaction center protein H (67 aa).

The chain crosses the membrane as a helical span at residues 27-47 (GAVPVMAFIGVLLLVFLVILL).

The protein belongs to the PsbH family. In terms of assembly, PSII is composed of 1 copy each of membrane proteins PsbA, PsbB, PsbC, PsbD, PsbE, PsbF, PsbH, PsbI, PsbJ, PsbK, PsbL, PsbM, PsbT, PsbX, PsbY, Psb30/Ycf12, peripheral proteins PsbO, CyanoQ (PsbQ), PsbU, PsbV and a large number of cofactors. It forms dimeric complexes.

It localises to the cellular thylakoid membrane. Functionally, one of the components of the core complex of photosystem II (PSII), required for its stability and/or assembly. PSII is a light-driven water:plastoquinone oxidoreductase that uses light energy to abstract electrons from H(2)O, generating O(2) and a proton gradient subsequently used for ATP formation. It consists of a core antenna complex that captures photons, and an electron transfer chain that converts photonic excitation into a charge separation. The chain is Photosystem II reaction center protein H from Prochlorococcus marinus (strain MIT 9211).